Reading from the N-terminus, the 107-residue chain is Endonuclease ALBA3 (107 aa).

2 positions are modified to N6-acetyllysine: lysine 23 and lysine 32.

This sequence belongs to the histone-like Alba family. Homodimer. Interacts (acetylated and unacetylated) with Sir2A. A divalent metal cation serves as cofactor. In terms of processing, acetylated. Exists in both acetylated and unacetylated forms but predominantly in an acetylated form. Deacetylated by Sir2A.

It is found in the nucleus. The protein resides in the chromosome. It localises to the telomere. Its subcellular location is the cytoplasm. Its activity is regulated as follows. Mild acetylation lowers protein interaction with DNA and high acetylation abolishes DNA-binding activity. DNA binding and endonuclease activity is modulated via deacetylation of Lys-23 by Sir2A. Inhibited in the presence of EDTA and EGTA. In terms of biological role, possesses DNA-binding and endonuclease activities. Binds DNA cooperatively in sequence-independent manner at the DNA minor groove. Exhibits apurinic/apyrimidinic site-driven endonuclease activity. Binds RNA; shows high affinity for poly(A) and a lower affinity for poly(U) templates. In vitro, prevents transcription after DNA binding. Associates with the telomeric region, the subtelomeric TARE6 repeat sequence and the var gene promoters. This Plasmodium falciparum (isolate 3D7) protein is Endonuclease ALBA3.